The chain runs to 227 residues: Germin-like protein subfamily 1 member 3 (227 aa).

An N-terminal signal peptide occupies residues 1 to 24 (MKYPFQCFLAKIILLALASSFVSC). A disulfide bridge links Cys34 with Cys50. A Cupin type-1 domain is found at 64–212 (SGLNIPGNTN…AFALDINIVR (149 aa)). His109, His111, and Glu116 together coordinate Mn(2+). Asn136 carries an N-linked (GlcNAc...) asparagine glycan. His160 lines the Mn(2+) pocket.

It belongs to the germin family. In terms of assembly, oligomer (believed to be a pentamer but probably hexamer).

The protein resides in the secreted. Its subcellular location is the extracellular space. It localises to the apoplast. Its function is as follows. May play a role in plant defense. Probably has no oxalate oxidase activity even if the active site is conserved. The sequence is that of Germin-like protein subfamily 1 member 3 from Arabidopsis thaliana (Mouse-ear cress).